Reading from the N-terminus, the 647-residue chain is 1-deoxy-D-xylulose-5-phosphate synthase (647 aa).

Residues H88 and 129–131 each bind thiamine diphosphate; that span reads GHA. Residue D160 coordinates Mg(2+). Residues 161–162, N189, Y300, and E377 contribute to the thiamine diphosphate site; that span reads GA. N189 contacts Mg(2+).

Belongs to the transketolase family. DXPS subfamily. In terms of assembly, homodimer. It depends on Mg(2+) as a cofactor. Thiamine diphosphate serves as cofactor.

It catalyses the reaction D-glyceraldehyde 3-phosphate + pyruvate + H(+) = 1-deoxy-D-xylulose 5-phosphate + CO2. Its pathway is metabolic intermediate biosynthesis; 1-deoxy-D-xylulose 5-phosphate biosynthesis; 1-deoxy-D-xylulose 5-phosphate from D-glyceraldehyde 3-phosphate and pyruvate: step 1/1. Catalyzes the acyloin condensation reaction between C atoms 2 and 3 of pyruvate and glyceraldehyde 3-phosphate to yield 1-deoxy-D-xylulose-5-phosphate (DXP). The sequence is that of 1-deoxy-D-xylulose-5-phosphate synthase from Dehalococcoides mccartyi (strain CBDB1).